Here is a 519-residue protein sequence, read N- to C-terminus: Cytochrome P450 709B1 (519 aa).

Residues 1-21 (MGLVIFLALIVLILIIGLRIF) form a helical membrane-spanning segment. C464 provides a ligand contact to heme.

It belongs to the cytochrome P450 family. Requires heme as cofactor. Highly expressed in siliques.

The protein localises to the membrane. Its function is as follows. Involved in stress response. Does not function as cytokinin hydroxylase in yeast heterologous system. The polypeptide is Cytochrome P450 709B1 (Arabidopsis thaliana (Mouse-ear cress)).